The following is a 154-amino-acid chain: Large ribosomal subunit protein uL30 (154 aa).

The segment at 114–139 (PTLRLHPPRGGHDGIKHPTKEGGQLG) is disordered. Basic and acidic residues predominate over residues 123–133 (GGHDGIKHPTK).

This sequence belongs to the universal ribosomal protein uL30 family. As to quaternary structure, part of the 50S ribosomal subunit.

The chain is Large ribosomal subunit protein uL30 from Natronomonas pharaonis (strain ATCC 35678 / DSM 2160 / CIP 103997 / JCM 8858 / NBRC 14720 / NCIMB 2260 / Gabara) (Halobacterium pharaonis).